We begin with the raw amino-acid sequence, 289 residues long: Myoblast determination protein 1 homolog A (289 aa).

Residues 95 to 146 (DRRKAATMRERRRLSKVNEAFETLKRYTSTNPNQRLPKVEILRNAIRYIESL) form the bHLH domain. The disordered stretch occupies residues 165-212 (SGDSDASSPRSNCSDGMMDYNSPPCGSRRRNSYDSSFYSDSPNDSRLG). 2 stretches are compositionally biased toward polar residues: residues 168-178 (SDASSPRSNCS) and 197-208 (YDSSFYSDSPND).

As to quaternary structure, efficient DNA binding requires dimerization with another bHLH protein.

It localises to the nucleus. In terms of biological role, may act as a transcriptional activator that promotes transcription of muscle-specific target genes and plays a role in muscle differentiation. The chain is Myoblast determination protein 1 homolog A (myod1-a) from Xenopus laevis (African clawed frog).